The sequence spans 312 residues: Malate dehydrogenase (312 aa).

Residues 7–13 (GAAGGIG) and Asp-34 contribute to the NAD(+) site. Arg-81 and Arg-87 together coordinate substrate. Residues Asn-94 and 117-119 (ITN) each bind NAD(+). Substrate-binding residues include Asn-119 and Arg-153. The Proton acceptor role is filled by His-177. Met-227 contributes to the NAD(+) binding site.

This sequence belongs to the LDH/MDH superfamily. MDH type 1 family. In terms of assembly, homodimer.

The catalysed reaction is (S)-malate + NAD(+) = oxaloacetate + NADH + H(+). In terms of biological role, catalyzes the reversible oxidation of malate to oxaloacetate. In Photorhabdus laumondii subsp. laumondii (strain DSM 15139 / CIP 105565 / TT01) (Photorhabdus luminescens subsp. laumondii), this protein is Malate dehydrogenase.